A 270-amino-acid polypeptide reads, in one-letter code: MQDSALERTRIAAVNAARAARASYRAGTVQPTAGIAPGMTQANMIALPRDWAWDFLLYAQRNPKACPVLDVIEAGAQQTVLAQGADIRTDIPLYRVWRDGKLAEEVADATPLWTEHPDLVTFLIGCSFTFETPLQEAGIEVRHIADGSNVPMYRTNRQCRPAGRLHGEMVVSMRPIPAHRVADAVSISGRFPSVHGSPVHVGDPAALGIADLARPDFGDAVRIEPGEIPVFWACGVTPQAAVMASGVPFAVTHAPGHMFITDVPDSTYHV.

It belongs to the D-glutamate cyclase family.

The protein is Putative hydro-lyase H16_B1759 of Cupriavidus necator (strain ATCC 17699 / DSM 428 / KCTC 22496 / NCIMB 10442 / H16 / Stanier 337) (Ralstonia eutropha).